The following is a 445-amino-acid chain: Probable fructoselysine/psicoselysine transporter FrlA (445 aa).

The next 11 helical transmembrane spans lie at 10–32 (LGFW…FVSV), 39–61 (AGTP…PQMC), 97–119 (FWAN…LGFL), 126–143 (LGKF…LLHL), 153–175 (QTLI…IFWF), 188–210 (IGAT…SYTG), 230–252 (RALI…VISG), 272–294 (WIPA…VILG), 341–363 (GIFF…VMCF), 384–406 (LWRT…ILVA), and 411–433 (WAPI…AYAF).

Belongs to the amino acid-polyamine-organocation (APC) superfamily.

The protein resides in the cell inner membrane. It catalyses the reaction N(6)-(D-fructosyl)-L-lysine(in) = N(6)-(D-fructosyl)-L-lysine(out). The enzyme catalyses N(6)-(D-psicosyl)-L-lysine(in) = N(6)-(D-psicosyl)-L-lysine(out). Its pathway is carbohydrate metabolism; fructoselysine degradation. Functionally, is likely involved in the transport of fructoselysine and psicoselysine to the cytoplasm, where they are degraded. This chain is Probable fructoselysine/psicoselysine transporter FrlA (frlA), found in Escherichia coli O157:H7.